The sequence spans 370 residues: 4-hydroxy-3-methylbut-2-en-1-yl diphosphate synthase (flavodoxin) (370 aa).

Residues C268, C271, C303, and E310 each contribute to the [4Fe-4S] cluster site.

Belongs to the IspG family. Requires [4Fe-4S] cluster as cofactor.

It catalyses the reaction (2E)-4-hydroxy-3-methylbut-2-enyl diphosphate + oxidized [flavodoxin] + H2O + 2 H(+) = 2-C-methyl-D-erythritol 2,4-cyclic diphosphate + reduced [flavodoxin]. It participates in isoprenoid biosynthesis; isopentenyl diphosphate biosynthesis via DXP pathway; isopentenyl diphosphate from 1-deoxy-D-xylulose 5-phosphate: step 5/6. Functionally, converts 2C-methyl-D-erythritol 2,4-cyclodiphosphate (ME-2,4cPP) into 1-hydroxy-2-methyl-2-(E)-butenyl 4-diphosphate. In Bacillus cereus (strain AH187), this protein is 4-hydroxy-3-methylbut-2-en-1-yl diphosphate synthase (flavodoxin).